The sequence spans 514 residues: Peptide chain release factor 3 (514 aa).

A tr-type G domain is found at 8 to 268 (KKRRTFAIIS…TFLEFAPEPH (261 aa)). Residues 17–24 (SHPDAGKT), 85–89 (DTPGH), and 139–142 (NKLD) contribute to the GTP site.

It belongs to the TRAFAC class translation factor GTPase superfamily. Classic translation factor GTPase family. PrfC subfamily.

The protein resides in the cytoplasm. Its function is as follows. Increases the formation of ribosomal termination complexes and stimulates activities of RF-1 and RF-2. It binds guanine nucleotides and has strong preference for UGA stop codons. It may interact directly with the ribosome. The stimulation of RF-1 and RF-2 is significantly reduced by GTP and GDP, but not by GMP. In Streptococcus pyogenes serotype M5 (strain Manfredo), this protein is Peptide chain release factor 3.